Consider the following 702-residue polypeptide: Methionine--tRNA ligase (702 aa).

The short motif at P23–H33 is the 'HIGH' region element. Residues C154, C157, C167, and C170 each coordinate Zn(2+). A 'KMSKS' region motif is present at residues K341–S345. K344 is an ATP binding site. Residues L562 to P593 form a disordered region. Polar residues predominate over residues A569–N578. A tRNA-binding domain is found at D599 to R702.

Belongs to the class-I aminoacyl-tRNA synthetase family. MetG type 1 subfamily. As to quaternary structure, homodimer. It depends on Zn(2+) as a cofactor.

Its subcellular location is the cytoplasm. It carries out the reaction tRNA(Met) + L-methionine + ATP = L-methionyl-tRNA(Met) + AMP + diphosphate. In terms of biological role, is required not only for elongation of protein synthesis but also for the initiation of all mRNA translation through initiator tRNA(fMet) aminoacylation. In Xylella fastidiosa (strain 9a5c), this protein is Methionine--tRNA ligase.